The sequence spans 263 residues: Endolytic peptidoglycan transglycosylase RlpA (263 aa).

A signal peptide spans methionine 1–glycine 16. Residue cysteine 17 is the site of N-palmitoyl cysteine attachment. A lipid anchor (S-diacylglycerol cysteine) is attached at cysteine 17. One can recognise an SPOR domain in the interval lysine 182–threonine 257.

This sequence belongs to the RlpA family.

It is found in the cell membrane. In terms of biological role, lytic transglycosylase with a strong preference for naked glycan strands that lack stem peptides. The chain is Endolytic peptidoglycan transglycosylase RlpA from Vibrio cholerae serotype O1 (strain ATCC 39315 / El Tor Inaba N16961).